A 200-amino-acid chain; its full sequence is dITP/XTP pyrophosphatase (200 aa).

A substrate-binding site is contributed by 8–13; sequence THNPNK. 2 residues coordinate Mg(2+): glutamate 41 and aspartate 71. The Proton acceptor role is filled by aspartate 71. Substrate contacts are provided by residues threonine 72, 153–156, lysine 176, and 181–182; these read FGYD and HR.

The protein belongs to the HAM1 NTPase family. As to quaternary structure, homodimer. Mg(2+) serves as cofactor.

The enzyme catalyses XTP + H2O = XMP + diphosphate + H(+). It carries out the reaction dITP + H2O = dIMP + diphosphate + H(+). It catalyses the reaction ITP + H2O = IMP + diphosphate + H(+). Its function is as follows. Pyrophosphatase that catalyzes the hydrolysis of nucleoside triphosphates to their monophosphate derivatives, with a high preference for the non-canonical purine nucleotides XTP (xanthosine triphosphate), dITP (deoxyinosine triphosphate) and ITP. Seems to function as a house-cleaning enzyme that removes non-canonical purine nucleotides from the nucleotide pool, thus preventing their incorporation into DNA/RNA and avoiding chromosomal lesions. The sequence is that of dITP/XTP pyrophosphatase from Caldanaerobacter subterraneus subsp. tengcongensis (strain DSM 15242 / JCM 11007 / NBRC 100824 / MB4) (Thermoanaerobacter tengcongensis).